The sequence spans 300 residues: MQVTSQFKTVALVGRNNTPGIAEPLTALASCIAKRGFEVVFEADTAAEIGVTDYPALRPAEIGARADVAVVLGGDGTMLGIGRQLAPYRTPLIGINHGRLGFITDIPISDMREIVPQMLSGNFEREERVLLEARIMRGGNPIYHALAFNDVVVNRSGFSGMAELHVSVDGRFMYNQRSDGLIVATPTGSTAYALSSQGPILHPQLQGIVLVPIAPHALSNRPIVLPDDSKVSIQIVSGREVNVNFDMQSFTSLELGDTIEVRRSRHTVPMLHPVGYSFFTTLRKKLHWNEYPSHEEDSKP.

D75 functions as the Proton acceptor in the catalytic mechanism. NAD(+) is bound by residues 75–76 (DG), 149–150 (ND), R177, D179, 190–195 (TAYALS), A214, and Q248.

The protein belongs to the NAD kinase family. Requires a divalent metal cation as cofactor.

It is found in the cytoplasm. The catalysed reaction is NAD(+) + ATP = ADP + NADP(+) + H(+). In terms of biological role, involved in the regulation of the intracellular balance of NAD and NADP, and is a key enzyme in the biosynthesis of NADP. Catalyzes specifically the phosphorylation on 2'-hydroxyl of the adenosine moiety of NAD to yield NADP. This Paraburkholderia phytofirmans (strain DSM 17436 / LMG 22146 / PsJN) (Burkholderia phytofirmans) protein is NAD kinase.